The chain runs to 231 residues: Urease accessory protein UreF (231 aa).

It belongs to the UreF family. UreD, UreF and UreG form a complex that acts as a GTP-hydrolysis-dependent molecular chaperone, activating the urease apoprotein by helping to assemble the nickel containing metallocenter of UreC. The UreE protein probably delivers the nickel.

Its subcellular location is the cytoplasm. Its function is as follows. Required for maturation of urease via the functional incorporation of the urease nickel metallocenter. This Magnetococcus marinus (strain ATCC BAA-1437 / JCM 17883 / MC-1) protein is Urease accessory protein UreF.